The primary structure comprises 469 residues: Siroheme synthase (469 aa).

The segment at 1–211 (MSTQLQTWDF…GRTDKARAML (211 aa)) is precorrin-2 dehydrogenase /sirohydrochlorin ferrochelatase. NAD(+) contacts are provided by residues 29-30 (EQ) and 50-51 (DP). Position 136 is a phosphoserine (Ser-136). The segment at 227–469 (GEVYLVGAGP…TLRDRLRWMD (243 aa)) is uroporphyrinogen-III C-methyltransferase. Pro-236 provides a ligand contact to S-adenosyl-L-methionine. Asp-259 serves as the catalytic Proton acceptor. Lys-281 (proton donor) is an active-site residue. S-adenosyl-L-methionine is bound by residues 312–314 (GGD), Ile-317, 342–343 (TA), Met-394, and Gly-423.

This sequence in the N-terminal section; belongs to the precorrin-2 dehydrogenase / sirohydrochlorin ferrochelatase family. The protein in the C-terminal section; belongs to the precorrin methyltransferase family.

It catalyses the reaction uroporphyrinogen III + 2 S-adenosyl-L-methionine = precorrin-2 + 2 S-adenosyl-L-homocysteine + H(+). The catalysed reaction is precorrin-2 + NAD(+) = sirohydrochlorin + NADH + 2 H(+). The enzyme catalyses siroheme + 2 H(+) = sirohydrochlorin + Fe(2+). The protein operates within cofactor biosynthesis; adenosylcobalamin biosynthesis; precorrin-2 from uroporphyrinogen III: step 1/1. It participates in cofactor biosynthesis; adenosylcobalamin biosynthesis; sirohydrochlorin from precorrin-2: step 1/1. It functions in the pathway porphyrin-containing compound metabolism; siroheme biosynthesis; precorrin-2 from uroporphyrinogen III: step 1/1. Its pathway is porphyrin-containing compound metabolism; siroheme biosynthesis; siroheme from sirohydrochlorin: step 1/1. The protein operates within porphyrin-containing compound metabolism; siroheme biosynthesis; sirohydrochlorin from precorrin-2: step 1/1. In terms of biological role, multifunctional enzyme that catalyzes the SAM-dependent methylations of uroporphyrinogen III at position C-2 and C-7 to form precorrin-2 via precorrin-1. Then it catalyzes the NAD-dependent ring dehydrogenation of precorrin-2 to yield sirohydrochlorin. Finally, it catalyzes the ferrochelation of sirohydrochlorin to yield siroheme. This is Siroheme synthase from Hahella chejuensis (strain KCTC 2396).